The primary structure comprises 528 residues: Nucleoporin ASM4 (528 aa).

An FG 1 repeat occupies 2–3; the sequence is FG. The segment covering 23–50 has biased composition (low complexity); the sequence is TTQMFQSQSQLQPQPQPQPQQQQQHLQF. Disordered stretches follow at residues 23-64 and 88-144; these read TTQM…FGNS and IKNG…SMNA. Composition is skewed to polar residues over residues 51–64 and 97–108; these read NGSS…FGNS and QHGQGNNPSWVN. One copy of the FG 2 repeat lies at 61–62; sequence FG. The span at 110–125 shows a compositional bias: basic residues; it reads PKKRFTPHTVIRRKTT. The span at 127–141 shows a compositional bias: low complexity; that stretch reads QNSSSDINQNDDSSS. 3 FG repeats span residues 195-196, 274-275, and 291-292; these read FG. In terms of domain architecture, RRM Nup35-type spans 265 to 394; it reads SSSLSAIIVF…IPYSKNAVEQ (130 aa). Ser-458 and Ser-464 each carry phosphoserine. The stretch at 490-510 forms a coiled coil; it reads NLLRNLESKMRQQEAKYRNNE. The stretch at 523-524 is one FG 6 repeat; it reads FG.

Component of the nuclear pore complex (NPC). NPC constitutes the exclusive means of nucleocytoplasmic transport. NPCs allow the passive diffusion of ions and small molecules and the active, nuclear transport receptor-mediated bidirectional transport of macromolecules such as proteins, RNAs, ribonucleoparticles (RNPs), and ribosomal subunits across the nuclear envelope. Due to its 8-fold rotational symmetry, all subunits are present with 8 copies or multiples thereof. ASM4 may form a subcomplex with NUP53, NDC1, and NUP170. In terms of processing, phosphorylated by CDC28.

Its subcellular location is the nucleus. It localises to the nuclear pore complex. It is found in the nucleus membrane. Functions as a component of the nuclear pore complex (NPC). NPC components, collectively referred to as nucleoporins (NUPs), can play the role of both NPC structural components and of docking or interaction partners for transiently associated nuclear transport factors. Active directional transport is assured by both, a Phe-Gly (FG) repeat affinity gradient for these transport factors across the NPC and a transport cofactor concentration gradient across the nuclear envelope (GSP1 and GSP2 GTPases associated predominantly with GTP in the nucleus, with GDP in the cytoplasm). May have a mitosis control function. The chain is Nucleoporin ASM4 (ASM4) from Saccharomyces cerevisiae (strain ATCC 204508 / S288c) (Baker's yeast).